Here is a 281-residue protein sequence, read N- to C-terminus: MASPSILKKYGKYFEYCPLEERMIELAKKGEIADAMLLFEKEKPSEFVYKGDAIEKRLRNIYLSTRLGVKAKINFNDYVIPRDLRWMLDIYESYLNMGENKVFLILGGELRYLIDFFESYLQFKGFYLLVVKEAKDLLRFRNTCHYDAIIFSDSSILEYQNVDELKNLFNSLETTLKVHNRKNSVKVLLSPALPKAIMSSKPYKVLEQFFKEKGIEMEGILPYQLNADDKLLPPHFHNSEMEKSKEYRELESKTKVYIQEFLKKANMNDENEGNDNQKNTN.

It is found in the plastid. The protein resides in the chloroplast. This is an uncharacterized protein from Euglena gracilis.